The primary structure comprises 204 residues: CLAVATA3/ESR (CLE)-related protein 1 (204 aa).

The signal sequence occupies residues 1-21; that stretch reads MAKNAMLCLLILSVVLALAFA. The segment at 21–83 is required for secretion from the host cytoplasm to the host apoplasm; it reads ATNEKDDKEA…SNQLQNAYRM (63 aa). A glycan (N-linked (GlcNAc...) asparagine) is linked at Asn-32. The tract at residues 116-204 is disordered; sequence RNTGMKPQSY…TPGVPDRQHR (89 aa). Basic and acidic residues-rich tracts occupy residues 139-151, 160-172, and 181-193; these read LHNREKILEEQKR and LHNREKTLEEQKR. 3 propeptides (removed in mature form) span residues 142 to 150, 163 to 171, and 184 to 192; these read REKILEEQK and REKTLEEQK.

This sequence belongs to the CLV3/ESR signal peptide family. Preprocessing of the precursor by host proteases leads first to the production of 21-mer CLE-containing peptides (Arg-130 to Lys-150, Arg-151 to Lys-171 and Arg-172 to Lys-192) followed by an ultimate C-term trimming to give the mature 12-mer CLE1-1 peptide. Highly expressed exclusively within the dorsal esophageal gland cell during syncytium formation in host plants.

It is found in the secreted. It localises to the host cytoplasm. The protein resides in the host extracellular space. The protein localises to the extracellular space. Its subcellular location is the apoplast. In terms of biological role, mimics host plant CLE extracellular signal peptides that regulate cell fate. May play a role in the differentiation or division of feeding cells (syncytia) induced in plant roots during infection. In Globodera rostochiensis (Golden nematode worm), this protein is CLAVATA3/ESR (CLE)-related protein 1.